Consider the following 564-residue polypeptide: Urocanate hydratase (564 aa).

NAD(+) contacts are provided by residues 58 to 59 (GG), Gln136, 182 to 184 (GMG), Glu202, Arg207, 248 to 249 (NA), 269 to 273 (QTSAH), 279 to 280 (YL), and Tyr328. The active site involves Cys416. Gly498 is an NAD(+) binding site.

It belongs to the urocanase family. The cofactor is NAD(+).

It is found in the cytoplasm. The enzyme catalyses 4-imidazolone-5-propanoate = trans-urocanate + H2O. The protein operates within amino-acid degradation; L-histidine degradation into L-glutamate; N-formimidoyl-L-glutamate from L-histidine: step 2/3. Catalyzes the conversion of urocanate to 4-imidazolone-5-propionate. The protein is Urocanate hydratase of Aliivibrio salmonicida (strain LFI1238) (Vibrio salmonicida (strain LFI1238)).